The sequence spans 375 residues: Growth/differentiation factor 8 (375 aa).

The first 18 residues, 1 to 18 (MQKLQISVYIYLFMLIVA), serve as a signal peptide directing secretion. Residues 19–266 (GPVDLNEKSE…VTDTPKRSRR (248 aa)) constitute a propeptide that is removed on maturation. N-linked (GlcNAc...) asparagine glycosylation is found at Asn47 and Asn71. Intrachain disulfides connect Cys272/Cys282, Cys281/Cys340, Cys309/Cys372, and Cys313/Cys374.

The protein belongs to the TGF-beta family. Homodimer; disulfide-linked. Interacts with WFIKKN2, leading to inhibit its activity. Interacts with FSTL3. In terms of processing, synthesized as large precursor molecule that undergoes proteolytic cleavage to generate an N-terminal propeptide and a disulfide linked C-terminal dimer, which is the biologically active molecule. The circulating form consists of a latent complex of the C-terminal dimer and other proteins, including its propeptide, which maintain the C-terminal dimer in a latent, inactive state. Ligand activation requires additional cleavage of the prodomain by a tolloid-like metalloproteinase.

It localises to the secreted. Its function is as follows. Acts specifically as a negative regulator of skeletal muscle growth. The protein is Growth/differentiation factor 8 (MSTN) of Taurotragus derbianus (Giant eland).